Here is a 235-residue protein sequence, read N- to C-terminus: MESNSNSNETMYGNPNINMGFVDSGNSNIGNNTGSMSPPPQQQQQPQQASSTPAGSVGIGGLSFSLGANGISLEPSSISHRVNAITSKIKEFKQERMETTRDWRSFVGSRQQYGLPNIKDTTSRIKENVVYFQSNYLILFLCFSVFFIITNPFYLLLLGVLLFISVYLHNSTTLTDIQRKIAYGIQAFLSIYFLLYAGSSIFWLVGATCCITLLHASFHSPNSTDETNIKFGDGV.

Positions 1-17 are enriched in polar residues; the sequence is MESNSNSNETMYGNPNI. The interval 1–55 is disordered; the sequence is MESNSNSNETMYGNPNINMGFVDSGNSNIGNNTGSMSPPPQQQQQPQQASSTPAG. The span at 24 to 48 shows a compositional bias: low complexity; the sequence is SGNSNIGNNTGSMSPPPQQQQQPQQ. The next 2 membrane-spanning stretches (helical) occupy residues 144–164 and 187–207; these read SVFF…LLFI and AFLS…LVGA.

Belongs to the PRA1 family.

Its subcellular location is the membrane. Its function is as follows. May act as a general Rab protein regulator. This chain is PRA1 family protein 1 (prafA), found in Dictyostelium discoideum (Social amoeba).